The following is a 755-amino-acid chain: Actin-related protein 5 (755 aa).

A Phosphoserine modification is found at serine 7. Lysine 12 is covalently cross-linked (Glycyl lysine isopeptide (Lys-Gly) (interchain with G-Cter in ubiquitin)). A Phosphothreonine modification is found at threonine 24. The residue at position 383 (serine 383) is a Phosphoserine. The disordered stretch occupies residues 418–444 (QRFLKASQDARQKAKEEKERVAKEEEE). Residues 425–444 (QDARQKAKEEKERVAKEEEE) show a composition bias toward basic and acidic residues.

The protein belongs to the actin family. Component of the chromatin-remodeling INO80 complex, at least composed of ARP4, ARP5, ARP8, RVB1, RVB2, TAF14, NHP10, IES1, IES3, IES4, IES6, ACT1, IES2, IES5 and INO80.

The protein resides in the nucleus. In terms of biological role, probably involved in transcription regulation via its interaction with the INO80 complex, a chromatin remodeling complex. This is Actin-related protein 5 (ARP5) from Saccharomyces cerevisiae (strain ATCC 204508 / S288c) (Baker's yeast).